Reading from the N-terminus, the 203-residue chain is CASP-like protein 2U5 (203 aa).

Residues 1–31 (MSEHRIPVAADKQISPPISAGEQKGCKGLKR) are Cytoplasmic-facing. Residues 32–52 (TDLMLRFAAFVCCAVTMVVLI) traverse the membrane as a helical segment. Residues 53–84 (TDKQTSAIQVPGFNNLTITKTVSFDLAKAFVY) are Extracellular-facing. Residue asparagine 67 is glycosylated (N-linked (GlcNAc...) asparagine). Residues 85-105 (LVSAAGIGAGYTLLVLVLSII) traverse the membrane as a helical segment. At 106–111 (SAERSK) the chain is on the cytoplasmic side. The helical transmembrane segment at 112–132 (AIAWFIFVFDQLITYVLLAAA) threads the bilayer. Over 133-164 (AASTEVAYMGAHAPPEASWLKVCSLFGRFCHQ) the chain is Extracellular. The helical transmembrane segment at 165–185 (LGASLVTSFISTVLFAFSAAI) threads the bilayer. The Cytoplasmic portion of the chain corresponds to 186–203 (SAYYLFSNTNVRPAYSKG).

It belongs to the Casparian strip membrane proteins (CASP) family. Homodimer and heterodimers.

The protein resides in the cell membrane. This Selaginella moellendorffii (Spikemoss) protein is CASP-like protein 2U5.